We begin with the raw amino-acid sequence, 426 residues long: Protein arginine N-methyltransferase 2 (426 aa).

Disordered stretches follow at residues 65–88 and 155–175; these read DEEE…GQES and DEEM…AVAA. The span at 73–88 shows a compositional bias: polar residues; the sequence is NGVQTNGDRQTHGQES. Residues 155–168 are compositionally biased toward acidic residues; that stretch reads DEEMEEDGEQEQEQ. Positions 207–426 constitute an RMT2 domain; it reads PSVTSSRYLN…YRLPLCKYMD (220 aa). S-adenosyl-L-methionine is bound by residues Tyr-214, Met-243, 263–268, 284–286, 311–312, and Asp-331; these read HGMGIV, EAH, and WQ.

This sequence belongs to the class I-like SAM-binding methyltransferase superfamily. RMT2 methyltransferase family. As to quaternary structure, monomer.

Its subcellular location is the cytoplasm. The protein resides in the nucleus. Its function is as follows. S-adenosyl-L-methionine-dependent protein-arginine N-methyltransferase that methylates the delta-nitrogen atom of arginine residues to form N5-methylarginine (type IV) in target proteins. Monomethylates ribosomal protein L12. The chain is Protein arginine N-methyltransferase 2 from Emericella nidulans (strain FGSC A4 / ATCC 38163 / CBS 112.46 / NRRL 194 / M139) (Aspergillus nidulans).